Reading from the N-terminus, the 143-residue chain is Phosphoprotein 32 (143 aa).

Residues 1–14 are compositionally biased toward polar residues; it reads MESSNINALQQPSS. The disordered stretch occupies residues 1–32; it reads MESSNINALQQPSSIAHHPSKQCASSLNETVK.

The protein belongs to the varicellovirus ORF32 protein family. Phosphorylated by ORF47 protein.

The polypeptide is Phosphoprotein 32 (Homo sapiens (Human)).